The following is a 228-amino-acid chain: L-ribulose-5-phosphate 4-epimerase UlaF (228 aa).

Substrate contacts are provided by residues 26 to 27 (GN), 43 to 44 (SG), and 72 to 73 (SS). Residues Asp-74, His-93, and His-95 each contribute to the Zn(2+) site. Catalysis depends on Asp-118, which acts as the Proton donor/acceptor. His-167 provides a ligand contact to Zn(2+). Residue Tyr-225 is the Proton donor/acceptor of the active site.

The protein belongs to the aldolase class II family. AraD/FucA subfamily. The cofactor is Zn(2+).

The catalysed reaction is L-ribulose 5-phosphate = D-xylulose 5-phosphate. It participates in cofactor degradation; L-ascorbate degradation; D-xylulose 5-phosphate from L-ascorbate: step 4/4. Functionally, catalyzes the isomerization of L-ribulose 5-phosphate to D-xylulose 5-phosphate. Is involved in the anaerobic L-ascorbate utilization. The sequence is that of L-ribulose-5-phosphate 4-epimerase UlaF from Escherichia coli (strain SE11).